A 723-amino-acid chain; its full sequence is Threonine--tRNA ligase 1, cytoplasmic (723 aa).

A disordered region spans residues 1–46 (MFEEKASSPSGKMGGEEKPIGAGEEKQKEGGKKKNKEGSGDGGRAE). A compositionally biased stretch (basic and acidic residues) spans 14-39 (GGEEKPIGAGEEKQKEGGKKKNKEGS). Serine 39 carries the phosphoserine modification. The TGS domain maps to 79–143 (DSKPIKVTLP…EEDCTLELLK (65 aa)). N6-acetyllysine is present on lysine 243. A Phosphothreonine modification is found at threonine 246. Tyrosine 298 bears the Phosphotyrosine mark. Threonine 453 is modified (phosphothreonine). Serine 702 is subject to Phosphoserine.

The protein belongs to the class-II aminoacyl-tRNA synthetase family. As to quaternary structure, homodimer. In terms of processing, ISGylated.

It is found in the cytoplasm. The enzyme catalyses tRNA(Thr) + L-threonine + ATP = L-threonyl-tRNA(Thr) + AMP + diphosphate + H(+). Its activity is regulated as follows. Inhibited by borrelidin (BN, IC 50 is 7 nM), which binds to 4 distinct subsites in the protein, preventing binding of all 3 substrates. Its function is as follows. Catalyzes the attachment of threonine to tRNA(Thr) in a two-step reaction: threonine is first activated by ATP to form Thr-AMP and then transferred to the acceptor end of tRNA(Thr). Also edits incorrectly charged tRNA(Thr) via its editing domain, at the post-transfer stage. In Homo sapiens (Human), this protein is Threonine--tRNA ligase 1, cytoplasmic.